Here is a 78-residue protein sequence, read N- to C-terminus: Acyl carrier protein (78 aa).

Positions 2–77 (SNIEDRVRKI…AAIDYVNSAS (76 aa)) constitute a Carrier domain. Position 37 is an O-(pantetheine 4'-phosphoryl)serine (Ser-37).

It belongs to the acyl carrier protein (ACP) family. Post-translationally, 4'-phosphopantetheine is transferred from CoA to a specific serine of apo-ACP by AcpS. This modification is essential for activity because fatty acids are bound in thioester linkage to the sulfhydryl of the prosthetic group.

The protein localises to the cytoplasm. The protein operates within lipid metabolism; fatty acid biosynthesis. In terms of biological role, carrier of the growing fatty acid chain in fatty acid biosynthesis. The sequence is that of Acyl carrier protein from Photobacterium profundum (strain SS9).